We begin with the raw amino-acid sequence, 218 residues long: ATP phosphoribosyltransferase (218 aa).

This sequence belongs to the ATP phosphoribosyltransferase family. Short subfamily. In terms of assembly, heteromultimer composed of HisG and HisZ subunits.

Its subcellular location is the cytoplasm. It carries out the reaction 1-(5-phospho-beta-D-ribosyl)-ATP + diphosphate = 5-phospho-alpha-D-ribose 1-diphosphate + ATP. It functions in the pathway amino-acid biosynthesis; L-histidine biosynthesis; L-histidine from 5-phospho-alpha-D-ribose 1-diphosphate: step 1/9. Catalyzes the condensation of ATP and 5-phosphoribose 1-diphosphate to form N'-(5'-phosphoribosyl)-ATP (PR-ATP). Has a crucial role in the pathway because the rate of histidine biosynthesis seems to be controlled primarily by regulation of HisG enzymatic activity. This Synechococcus elongatus (strain ATCC 33912 / PCC 7942 / FACHB-805) (Anacystis nidulans R2) protein is ATP phosphoribosyltransferase.